Reading from the N-terminus, the 624-residue chain is Ferredoxin-fold anticodon-binding domain-containing protein 1 (624 aa).

Positions leucine 531–arginine 624 constitute an FDX-ACB domain.

In Homo sapiens (Human), this protein is Ferredoxin-fold anticodon-binding domain-containing protein 1 (FDXACB1).